A 279-amino-acid polypeptide reads, in one-letter code: Putative pyruvate, phosphate dikinase regulatory protein (279 aa).

153 to 160 (GVSRTSKT) serves as a coordination point for ADP.

This sequence belongs to the pyruvate, phosphate/water dikinase regulatory protein family. PDRP subfamily.

The catalysed reaction is N(tele)-phospho-L-histidyl/L-threonyl-[pyruvate, phosphate dikinase] + ADP = N(tele)-phospho-L-histidyl/O-phospho-L-threonyl-[pyruvate, phosphate dikinase] + AMP + H(+). It catalyses the reaction N(tele)-phospho-L-histidyl/O-phospho-L-threonyl-[pyruvate, phosphate dikinase] + phosphate + H(+) = N(tele)-phospho-L-histidyl/L-threonyl-[pyruvate, phosphate dikinase] + diphosphate. Functionally, bifunctional serine/threonine kinase and phosphorylase involved in the regulation of the pyruvate, phosphate dikinase (PPDK) by catalyzing its phosphorylation/dephosphorylation. This chain is Putative pyruvate, phosphate dikinase regulatory protein, found in Rhodopseudomonas palustris (strain BisB5).